Reading from the N-terminus, the 396-residue chain is Elongation factor Tu (396 aa).

Residues 10–206 (KPHVNVGTIG…ALDTYIPEPE (197 aa)) enclose the tr-type G domain. The segment at 19–26 (GHVDHGKT) is G1. Position 19–26 (19–26 (GHVDHGKT)) interacts with GTP. Mg(2+) is bound at residue threonine 26. The tract at residues 60-64 (GITIN) is G2. The G3 stretch occupies residues 81–84 (DCPG). Residues 81-85 (DCPGH) and 136-139 (NKCD) contribute to the GTP site. The interval 136-139 (NKCD) is G4. The segment at 174 to 176 (SAL) is G5.

The protein belongs to the TRAFAC class translation factor GTPase superfamily. Classic translation factor GTPase family. EF-Tu/EF-1A subfamily. Monomer.

It localises to the cytoplasm. It carries out the reaction GTP + H2O = GDP + phosphate + H(+). GTP hydrolase that promotes the GTP-dependent binding of aminoacyl-tRNA to the A-site of ribosomes during protein biosynthesis. The chain is Elongation factor Tu from Acinetobacter baylyi (strain ATCC 33305 / BD413 / ADP1).